Reading from the N-terminus, the 153-residue chain is Ubiquitin-conjugating enzyme E2 36 (153 aa).

Residues 5–151 (NLPRRIIKET…AKEWTRLYAS (147 aa)) enclose the UBC core domain. Cysteine 89 acts as the Glycyl thioester intermediate in catalysis.

Belongs to the ubiquitin-conjugating enzyme family. In terms of assembly, interacts with yeast and human Mms2, with the RING domain of RGLG2 and with UEV1A, UEV1B, UEV1C and UEV1D. As to expression, ubiquitously expressed at low level.

It carries out the reaction S-ubiquitinyl-[E1 ubiquitin-activating enzyme]-L-cysteine + [E2 ubiquitin-conjugating enzyme]-L-cysteine = [E1 ubiquitin-activating enzyme]-L-cysteine + S-ubiquitinyl-[E2 ubiquitin-conjugating enzyme]-L-cysteine.. The protein operates within protein modification; protein ubiquitination. Functionally, catalyzes the synthesis of non-canonical poly-ubiquitin chains that are linked through 'Lys-63'. This type of poly-ubiquitination does not lead to protein degradation by the proteasome. Mediates transcriptional activation of target genes. Required for postreplication repair of UV-damaged DNA and for adapting root developmental programs to suboptimal availability of iron. The chain is Ubiquitin-conjugating enzyme E2 36 (UBC36) from Arabidopsis thaliana (Mouse-ear cress).